The following is a 238-amino-acid chain: MPVLVITGTGTEVGKTVVTAAVAAAALAGGRTVAVLKAAQTGVGPDEAGDAQEVARLAGTATVAEVARFPDPLAPGTAARRAGRTPVRPEEVAEAATKLATEHDLVLVEGAGGLLVRFDAEGGTLADVAGLLDAPVLLVTSAGLGTLNTTELTARELRSRGLELPGLVIGSWPGAPDLAARCNLADLPDVSGAPLLGAVPAGAGSLSPAAFRSAAPHWLAPPLDGTWDADAFGDRHGP.

12–17 (EVGKTV) provides a ligand contact to ATP. A Mg(2+)-binding site is contributed by T16. The active site involves K37. T41 lines the substrate pocket. ATP-binding positions include D50, 109–112 (EGAG), 170–171 (GS), and 200–202 (PAG). Mg(2+)-binding residues include D50 and E109.

The protein belongs to the dethiobiotin synthetase family. As to quaternary structure, homodimer. The cofactor is Mg(2+).

The protein resides in the cytoplasm. It catalyses the reaction (7R,8S)-7,8-diammoniononanoate + CO2 + ATP = (4R,5S)-dethiobiotin + ADP + phosphate + 3 H(+). Its pathway is cofactor biosynthesis; biotin biosynthesis; biotin from 7,8-diaminononanoate: step 1/2. Functionally, catalyzes a mechanistically unusual reaction, the ATP-dependent insertion of CO2 between the N7 and N8 nitrogen atoms of 7,8-diaminopelargonic acid (DAPA, also called 7,8-diammoniononanoate) to form a ureido ring. This chain is ATP-dependent dethiobiotin synthetase BioD, found in Streptomyces coelicolor (strain ATCC BAA-471 / A3(2) / M145).